We begin with the raw amino-acid sequence, 193 residues long: Acyl carrier protein phosphodiesterase (193 aa).

The protein belongs to the AcpH family.

It carries out the reaction holo-[ACP] + H2O = apo-[ACP] + (R)-4'-phosphopantetheine + H(+). Functionally, converts holo-ACP to apo-ACP by hydrolytic cleavage of the phosphopantetheine prosthetic group from ACP. The chain is Acyl carrier protein phosphodiesterase from Salmonella newport (strain SL254).